A 574-amino-acid polypeptide reads, in one-letter code: Acyloxyacyl hydrolase (574 aa).

The first 22 residues, 1–22, serve as a signal peptide directing secretion; it reads MKFPWKVFKTTLLLLLLSHSLA. Residues 23-33 constitute a propeptide that is removed on maturation; the sequence is SVPSEDQPGDS. The 82-residue stretch at 36-117 folds into the Saposin B-type domain; the sequence is HGQSCLGCVV…YALEFCKRGA (82 aa). Residues 37 to 69 form an important for enzyme activity, localization to cytoplasmic vesicles, and protein stability region; it reads GQSCLGCVVLVSVIEQLAEVHNSSVQVAMERLC. 8 disulfide bridges follow: Cys-40–Cys-113, Cys-43–Cys-107, Cys-69–Cys-82, Cys-122–Cys-452, Cys-159–Cys-168, Cys-205–Cys-229, Cys-248–Cys-328, and Cys-375–Cys-458. A glycan (N-linked (GlcNAc...) asparagine) is linked at Asn-58. The lipopolysaccharide binding stretch occupies residues 172–176; that stretch reads ELSIK. Residues Asp-183, Asp-185, Asp-187, His-189, Asp-204, Asn-206, Asp-207, Asp-209, Val-212, Asp-222, Asp-226, Asn-228, Asn-230, Ile-232, and Glu-244 each coordinate Ca(2+). Asn-206 carries N-linked (GlcNAc...) asparagine glycosylation. The active site involves Ser-262. 2 N-linked (GlcNAc...) asparagine glycosylation sites follow: Asn-408 and Asn-465.

In terms of assembly, heterodimer of the large and small subunits; disulfide-linked. Ca(2+) serves as cofactor. Cleaved into a large and a small subunit. In terms of processing, the small subunit is N-glycosylated. Detected in peritoneal macrophages (at protein level). Strongly expressed in kidney cortex, where it may be produced by proximal tubule cells. In liver, expressed at high levels in Kupffer cells. Expressed by dendritic cells. Detected at low levels in alveolar macrophages.

It is found in the secreted. Its subcellular location is the cytoplasmic vesicle. It carries out the reaction a 3-(acyloxy)acyl derivative of bacterial toxin + H2O = a 3-hydroxyacyl derivative of bacterial toxin + a fatty acid + H(+). Its function is as follows. Removes the secondary (acyloxyacyl-linked) fatty acyl chains from the lipid A region of bacterial lipopolysaccharides (LPS). By breaking down LPS, terminates the host response to bacterial infection and prevents prolonged and damaging inflammatory responses. In peritoneal macrophages, seems to be important for recovery from a state of immune tolerance following infection by Gram-negative bacteria. The chain is Acyloxyacyl hydrolase from Mus musculus (Mouse).